The following is a 562-amino-acid chain: Dihydroxy-acid dehydratase (562 aa).

Asp80 lines the Mg(2+) pocket. Cys121 is a [2Fe-2S] cluster binding site. Positions 122 and 123 each coordinate Mg(2+). An N6-carboxylysine modification is found at Lys123. Position 194 (Cys194) interacts with [2Fe-2S] cluster. Glu446 provides a ligand contact to Mg(2+). The Proton acceptor role is filled by Ser472.

The protein belongs to the IlvD/Edd family. In terms of assembly, homodimer. Requires [2Fe-2S] cluster as cofactor. It depends on Mg(2+) as a cofactor.

It carries out the reaction (2R)-2,3-dihydroxy-3-methylbutanoate = 3-methyl-2-oxobutanoate + H2O. The catalysed reaction is (2R,3R)-2,3-dihydroxy-3-methylpentanoate = (S)-3-methyl-2-oxopentanoate + H2O. It participates in amino-acid biosynthesis; L-isoleucine biosynthesis; L-isoleucine from 2-oxobutanoate: step 3/4. The protein operates within amino-acid biosynthesis; L-valine biosynthesis; L-valine from pyruvate: step 3/4. Functionally, functions in the biosynthesis of branched-chain amino acids. Catalyzes the dehydration of (2R,3R)-2,3-dihydroxy-3-methylpentanoate (2,3-dihydroxy-3-methylvalerate) into 2-oxo-3-methylpentanoate (2-oxo-3-methylvalerate) and of (2R)-2,3-dihydroxy-3-methylbutanoate (2,3-dihydroxyisovalerate) into 2-oxo-3-methylbutanoate (2-oxoisovalerate), the penultimate precursor to L-isoleucine and L-valine, respectively. The sequence is that of Dihydroxy-acid dehydratase from Staphylococcus aureus (strain USA300 / TCH1516).